Here is a 181-residue protein sequence, read N- to C-terminus: Caltractin ICL1a (181 aa).

The tract at residues 1 to 29 is disordered; it reads MARRGQQPPPQQAPPAQKNQPGKFNPAEF. Low complexity predominate over residues 14–23; the sequence is PPAQKNQPGK. EF-hand domains are found at residues 37 to 72, 73 to 108, 110 to 145, and 146 to 181; these read EEVL…LGFE, AKNQ…RISE, DSKA…LGET, and MDDS…KTFA. Ca(2+)-binding residues include Asp-50, Asp-52, Thr-54, Ser-56, Glu-61, Asp-86, Asp-88, Ser-90, Gln-92, and Glu-97.

Belongs to the centrin family. As to quaternary structure, monomer.

The protein resides in the cytoplasm. It localises to the cytoskeleton. Functionally, plays a fundamental role in microtubule organizing center structure and function. Component of the infraciliary lattice (ICL) and the ciliary basal bodies. The sequence is that of Caltractin ICL1a (Icl1a) from Paramecium tetraurelia.